A 232-amino-acid polypeptide reads, in one-letter code: Phosphatidylserine decarboxylase proenzyme (232 aa).

Ser190 functions as the Schiff-base intermediate with substrate; via pyruvic acid in the catalytic mechanism. Ser190 carries the pyruvic acid (Ser); by autocatalysis modification.

It belongs to the phosphatidylserine decarboxylase family. PSD-A subfamily. Heterodimer of a large membrane-associated beta subunit and a small pyruvoyl-containing alpha subunit. It depends on pyruvate as a cofactor. Post-translationally, is synthesized initially as an inactive proenzyme. Formation of the active enzyme involves a self-maturation process in which the active site pyruvoyl group is generated from an internal serine residue via an autocatalytic post-translational modification. Two non-identical subunits are generated from the proenzyme in this reaction, and the pyruvate is formed at the N-terminus of the alpha chain, which is derived from the carboxyl end of the proenzyme. The post-translation cleavage follows an unusual pathway, termed non-hydrolytic serinolysis, in which the side chain hydroxyl group of the serine supplies its oxygen atom to form the C-terminus of the beta chain, while the remainder of the serine residue undergoes an oxidative deamination to produce ammonia and the pyruvoyl prosthetic group on the alpha chain.

The protein localises to the cell membrane. It carries out the reaction a 1,2-diacyl-sn-glycero-3-phospho-L-serine + H(+) = a 1,2-diacyl-sn-glycero-3-phosphoethanolamine + CO2. It participates in phospholipid metabolism; phosphatidylethanolamine biosynthesis; phosphatidylethanolamine from CDP-diacylglycerol: step 2/2. Catalyzes the formation of phosphatidylethanolamine (PtdEtn) from phosphatidylserine (PtdSer). The chain is Phosphatidylserine decarboxylase proenzyme from Rhizobium leguminosarum bv. trifolii (strain WSM2304).